We begin with the raw amino-acid sequence, 117 residues long: Ribosome maturation factor RimP (117 aa).

Belongs to the RimP family.

It is found in the cytoplasm. Required for maturation of 30S ribosomal subunits. This is Ribosome maturation factor RimP from Rickettsia prowazekii (strain Madrid E).